The primary structure comprises 429 residues: Enolase (429 aa).

Gln163 contributes to the (2R)-2-phosphoglycerate binding site. The active-site Proton donor is the Glu205. Mg(2+) is bound by residues Asp242, Glu286, and Asp313. The (2R)-2-phosphoglycerate site is built by Lys338, Arg367, Ser368, and Lys389. The Proton acceptor role is filled by Lys338.

This sequence belongs to the enolase family. Mg(2+) is required as a cofactor.

The protein resides in the cytoplasm. It localises to the secreted. Its subcellular location is the cell surface. The enzyme catalyses (2R)-2-phosphoglycerate = phosphoenolpyruvate + H2O. Its pathway is carbohydrate degradation; glycolysis; pyruvate from D-glyceraldehyde 3-phosphate: step 4/5. Catalyzes the reversible conversion of 2-phosphoglycerate (2-PG) into phosphoenolpyruvate (PEP). It is essential for the degradation of carbohydrates via glycolysis. The sequence is that of Enolase from Citrifermentans bemidjiense (strain ATCC BAA-1014 / DSM 16622 / JCM 12645 / Bem) (Geobacter bemidjiensis).